The sequence spans 528 residues: Ladinin-1 (528 aa).

The tract at residues 1 to 404 (MSVSRKDWSA…NSETPLTRSA (404 aa)) is disordered. A phosphoserine mark is found at S38, S56, S62, S72, and S76. Over residues 88 to 97 (RTRKERRQRR) the composition is skewed to basic residues. S119 is modified (phosphoserine). Basic and acidic residues predominate over residues 134–173 (KKVEALPRRRLSREQRGPWAQDEERLKNRELAEGEKRLPE). SEK repeat units follow at residues 184 to 186 (SEK), 190 to 192 (SEK), 202 to 204 (SEK), and 208 to 210 (SEK). Positions 184–281 (SEKTPVSEKT…MQERKLVSEK (98 aa)) are 6 X SEK repeats. 2 stretches are compositionally biased toward basic and acidic residues: residues 218–231 (SLTE…KLVP) and 267–279 (IVSE…KLVS). SEK repeat units lie at residues 269–271 (SEK) and 279–281 (SEK). Residues 304–316 (EQPQTTGGSQATT) are compositionally biased toward polar residues. Phosphoserine occurs at positions 328, 358, 367, 405, and 496. The span at 365–377 (TPSPTLLTYSSSL) shows a compositional bias: low complexity. Residues 492–528 (KTQDSGDHGSQEVRKEASVTKRAQWGSKPSTSLDAEV) form a disordered region. Residues 495–510 (DSGDHGSQEVRKEASV) show a composition bias toward basic and acidic residues. The span at 518 to 528 (SKPSTSLDAEV) shows a compositional bias: polar residues.

As to expression, expressed in kidney, lung and keratinocytes followed by liver, spleen and brain. Not expressed in testis, skeletal and heart muscle and in fibroblasts.

The protein localises to the secreted. Its subcellular location is the extracellular space. It is found in the extracellular matrix. It localises to the basement membrane. Anchoring filament protein which is a component of the basement membrane zone. The sequence is that of Ladinin-1 (Lad1) from Mus musculus (Mouse).